The following is a 401-amino-acid chain: Acetate kinase (401 aa).

N7 contacts Mg(2+). K14 contacts ATP. Position 90 (R90) interacts with substrate. The Proton donor/acceptor role is filled by D147. ATP is bound by residues 207–211, 282–284, and 330–334; these read HLGNG, DFR, and GVGEN. E383 contributes to the Mg(2+) binding site.

It belongs to the acetokinase family. Homodimer. Mg(2+) serves as cofactor. Requires Mn(2+) as cofactor.

Its subcellular location is the cytoplasm. The enzyme catalyses acetate + ATP = acetyl phosphate + ADP. Its pathway is metabolic intermediate biosynthesis; acetyl-CoA biosynthesis; acetyl-CoA from acetate: step 1/2. In terms of biological role, catalyzes the formation of acetyl phosphate from acetate and ATP. Can also catalyze the reverse reaction. This Clostridium novyi (strain NT) protein is Acetate kinase.